Reading from the N-terminus, the 237-residue chain is Large ribosomal subunit protein uL3 (237 aa).

2 disordered regions span residues 133 to 155 and 213 to 237; these read ASHG…DPGK and PENA…EGAE. Positions 135-150 are enriched in polar residues; it reads HGNSITHRSHGSTGQR. Position 151 is an N5-methylglutamine (Gln151). Low complexity predominate over residues 220 to 237; it reads AGLRAGAKAEAAATEGAE.

This sequence belongs to the universal ribosomal protein uL3 family. As to quaternary structure, part of the 50S ribosomal subunit. Forms a cluster with proteins L14 and L19. Methylated by PrmB.

Its function is as follows. One of the primary rRNA binding proteins, it binds directly near the 3'-end of the 23S rRNA, where it nucleates assembly of the 50S subunit. The sequence is that of Large ribosomal subunit protein uL3 from Brucella suis biovar 1 (strain 1330).